Here is a 136-residue protein sequence, read N- to C-terminus: Large ribosomal subunit protein bL17 (136 aa).

It belongs to the bacterial ribosomal protein bL17 family. As to quaternary structure, part of the 50S ribosomal subunit. Contacts protein L32.

The sequence is that of Large ribosomal subunit protein bL17 from Rickettsia peacockii (strain Rustic).